Reading from the N-terminus, the 126-residue chain is Glycine cleavage system H protein (126 aa).

Positions 22–104 (TVTIGITEYA…YEKAWMVKVE (83 aa)) constitute a Lipoyl-binding domain. Position 63 is an N6-lipoyllysine (Lys-63).

Belongs to the GcvH family. As to quaternary structure, the glycine cleavage system is composed of four proteins: P, T, L and H. (R)-lipoate is required as a cofactor.

The glycine cleavage system catalyzes the degradation of glycine. The H protein shuttles the methylamine group of glycine from the P protein to the T protein. Its function is as follows. Is also involved in protein lipoylation via its role as an octanoyl/lipoyl carrier protein intermediate. The polypeptide is Glycine cleavage system H protein (Staphylococcus haemolyticus (strain JCSC1435)).